The sequence spans 294 residues: 4-hydroxy-tetrahydrodipicolinate synthase (294 aa).

Threonine 46 is a binding site for pyruvate. Tyrosine 135 acts as the Proton donor/acceptor in catalysis. The active-site Schiff-base intermediate with substrate is the lysine 164. Isoleucine 205 contacts pyruvate.

It belongs to the DapA family. As to quaternary structure, homotetramer; dimer of dimers.

The protein localises to the cytoplasm. The enzyme catalyses L-aspartate 4-semialdehyde + pyruvate = (2S,4S)-4-hydroxy-2,3,4,5-tetrahydrodipicolinate + H2O + H(+). The protein operates within amino-acid biosynthesis; L-lysine biosynthesis via DAP pathway; (S)-tetrahydrodipicolinate from L-aspartate: step 3/4. Its function is as follows. Catalyzes the condensation of (S)-aspartate-beta-semialdehyde [(S)-ASA] and pyruvate to 4-hydroxy-tetrahydrodipicolinate (HTPA). The sequence is that of 4-hydroxy-tetrahydrodipicolinate synthase from Nitratiruptor sp. (strain SB155-2).